The following is a 177-amino-acid chain: Peptidyl-tRNA hydrolase (177 aa).

Tyr-18 is a binding site for tRNA. Catalysis depends on His-23, which acts as the Proton acceptor. 3 residues coordinate tRNA: Phe-65, Asn-67, and Asn-113.

The protein belongs to the PTH family. In terms of assembly, monomer.

It localises to the cytoplasm. The enzyme catalyses an N-acyl-L-alpha-aminoacyl-tRNA + H2O = an N-acyl-L-amino acid + a tRNA + H(+). Functionally, hydrolyzes ribosome-free peptidyl-tRNAs (with 1 or more amino acids incorporated), which drop off the ribosome during protein synthesis, or as a result of ribosome stalling. Catalyzes the release of premature peptidyl moieties from peptidyl-tRNA molecules trapped in stalled 50S ribosomal subunits, and thus maintains levels of free tRNAs and 50S ribosomes. The sequence is that of Peptidyl-tRNA hydrolase from Corynebacterium efficiens (strain DSM 44549 / YS-314 / AJ 12310 / JCM 11189 / NBRC 100395).